The sequence spans 330 residues: Protein-lysine N-methyltransferase EEF2KMT (330 aa).

N-acetylmethionine is present on Met-1. Residues Trp-139, 165–167, Trp-228, and Ala-247 contribute to the S-adenosyl-L-methionine site; that span reads GSG.

The protein belongs to the class I-like SAM-binding methyltransferase superfamily. EEF2KMT family. In terms of assembly, interacts with FAM86B2 and FAM86C1P.

The protein resides in the cytoplasm. It carries out the reaction L-lysyl-[protein] + 3 S-adenosyl-L-methionine = N(6),N(6),N(6)-trimethyl-L-lysyl-[protein] + 3 S-adenosyl-L-homocysteine + 3 H(+). Its function is as follows. Catalyzes the trimethylation of eukaryotic elongation factor 2 (EEF2) on 'Lys-525'. The protein is Protein-lysine N-methyltransferase EEF2KMT of Homo sapiens (Human).